A 444-amino-acid polypeptide reads, in one-letter code: MKAREANFDGLVGPTHNYSGLSFGNVASEKNQANQSNPKQAAKQGLAKMKALADMGLVQGILAPQERPDVHTLRRLGFMGSDANVIEQAAKQAPKVLAACCSASSMWTANAATVSPSADTADGKVHFTPANLTNKFHRSIEHETTGRILQATFADKNHFAHHSALPAVEHFGDEGAANHTRFCHQYDEHGVEFFVYGRHAFDSRYPAPKKYPARHTFEACEAVVRLHQLTSDKVVIAQQNPDVIDQGVFHNDVIAVGNKNVLFCHEQAFLNQQAVYKELTAKVGGNFKIIEVPTSAITIEDAVTSYLFNSQLIEMPNGETLLILPEECRNNERVWAHVQTIINAKQGIDKVQIFDLKQSMANGGGPACLRLRVVLNEQELQAVNQSTLMNDTLFNRLNTWVDSHYRDTVTDADLADPQLVVESRAALDALTQILDLGSVYAFQR.

Residues 19-28 (SGLSFGNVAS), Asn110, and 137-138 (HR) each bind substrate. The active site involves Glu174. A substrate-binding site is contributed by Arg214. His250 is an active-site residue. Asp252 and Asn362 together coordinate substrate. Catalysis depends on Cys368, which acts as the Nucleophile.

It belongs to the succinylarginine dihydrolase family. In terms of assembly, homodimer.

The enzyme catalyses N(2)-succinyl-L-arginine + 2 H2O + 2 H(+) = N(2)-succinyl-L-ornithine + 2 NH4(+) + CO2. It participates in amino-acid degradation; L-arginine degradation via AST pathway; L-glutamate and succinate from L-arginine: step 2/5. Its function is as follows. Catalyzes the hydrolysis of N(2)-succinylarginine into N(2)-succinylornithine, ammonia and CO(2). This chain is N-succinylarginine dihydrolase, found in Photobacterium profundum (strain SS9).